The sequence spans 105 residues: RNQPTAALGHLLPEGTPVPLIPVLIIIETISLFIRPLALGVRLTANLTAGHLLIQLIATAAFVLLPMMPTVAILTSIVLFLLTLLEIAVAMIQAYVFVLLLSLYL.

Helical transmembrane passes span 14–34, 47–67, and 72–92; these read EGTP…SLFI, LTAG…LLPM, and AILT…VAMI.

It belongs to the ATPase A chain family. In terms of assembly, component of the ATP synthase complex composed at least of ATP5F1A/subunit alpha, ATP5F1B/subunit beta, ATP5MC1/subunit c (homooctomer), MT-ATP6/subunit a, MT-ATP8/subunit 8, ATP5ME/subunit e, ATP5MF/subunit f, ATP5MG/subunit g, ATP5MK/subunit k, ATP5MJ/subunit j, ATP5F1C/subunit gamma, ATP5F1D/subunit delta, ATP5F1E/subunit epsilon, ATP5PF/subunit F6, ATP5PB/subunit b, ATP5PD/subunit d, ATP5PO/subunit OSCP. ATP synthase complex consists of a soluble F(1) head domain (subunits alpha(3) and beta(3)) - the catalytic core - and a membrane F(0) domain - the membrane proton channel (subunits c, a, 8, e, f, g, k and j). These two domains are linked by a central stalk (subunits gamma, delta, and epsilon) rotating inside the F1 region and a stationary peripheral stalk (subunits F6, b, d, and OSCP). Interacts with DNAJC30; interaction is direct.

Its subcellular location is the mitochondrion inner membrane. The catalysed reaction is H(+)(in) = H(+)(out). Its function is as follows. Subunit a, of the mitochondrial membrane ATP synthase complex (F(1)F(0) ATP synthase or Complex V) that produces ATP from ADP in the presence of a proton gradient across the membrane which is generated by electron transport complexes of the respiratory chain. ATP synthase complex consist of a soluble F(1) head domain - the catalytic core - and a membrane F(1) domain - the membrane proton channel. These two domains are linked by a central stalk rotating inside the F(1) region and a stationary peripheral stalk. During catalysis, ATP synthesis in the catalytic domain of F(1) is coupled via a rotary mechanism of the central stalk subunits to proton translocation. With the subunit c (ATP5MC1), forms the proton-conducting channel in the F(0) domain, that contains two crucial half-channels (inlet and outlet) that facilitate proton movement from the mitochondrial intermembrane space (IMS) into the matrix. Protons are taken up via the inlet half-channel and released through the outlet half-channel, following a Grotthuss mechanism. The polypeptide is ATP synthase F(0) complex subunit a (Salmo trutta (Brown trout)).